Reading from the N-terminus, the 446-residue chain is N-succinylarginine dihydrolase (446 aa).

Substrate contacts are provided by residues 19 to 28 (AGLSFGNVAS), Asn110, and 137 to 138 (HR). The active site involves Glu174. Arg213 serves as a coordination point for substrate. Residue His249 is part of the active site. Substrate-binding residues include Asp251 and Asn364. Residue Cys370 is the Nucleophile of the active site.

Belongs to the succinylarginine dihydrolase family. As to quaternary structure, homodimer.

It catalyses the reaction N(2)-succinyl-L-arginine + 2 H2O + 2 H(+) = N(2)-succinyl-L-ornithine + 2 NH4(+) + CO2. Its pathway is amino-acid degradation; L-arginine degradation via AST pathway; L-glutamate and succinate from L-arginine: step 2/5. In terms of biological role, catalyzes the hydrolysis of N(2)-succinylarginine into N(2)-succinylornithine, ammonia and CO(2). This chain is N-succinylarginine dihydrolase, found in Burkholderia ambifaria (strain ATCC BAA-244 / DSM 16087 / CCUG 44356 / LMG 19182 / AMMD) (Burkholderia cepacia (strain AMMD)).